Reading from the N-terminus, the 239-residue chain is Methylthioribulose-1-phosphate dehydratase (239 aa).

Cysteine 94 contributes to the substrate binding site. Residues histidine 112 and histidine 114 each coordinate Zn(2+). The Proton donor/acceptor role is filled by glutamate 136. Histidine 192 provides a ligand contact to Zn(2+).

This sequence belongs to the aldolase class II family. MtnB subfamily. The cofactor is Zn(2+).

The protein resides in the cytoplasm. It catalyses the reaction 5-(methylsulfanyl)-D-ribulose 1-phosphate = 5-methylsulfanyl-2,3-dioxopentyl phosphate + H2O. It participates in amino-acid biosynthesis; L-methionine biosynthesis via salvage pathway; L-methionine from S-methyl-5-thio-alpha-D-ribose 1-phosphate: step 2/6. Functionally, catalyzes the dehydration of methylthioribulose-1-phosphate (MTRu-1-P) into 2,3-diketo-5-methylthiopentyl-1-phosphate (DK-MTP-1-P). Functions in the methionine salvage pathway. May play a role in apoptosis. This Xenopus tropicalis (Western clawed frog) protein is Methylthioribulose-1-phosphate dehydratase.